The chain runs to 554 residues: Chaperonin GroEL (554 aa).

Residues 30–33 (TLGP), lysine 51, 87–91 (DGTTT), glycine 415, 478–480 (DAA), and aspartate 494 each bind ATP.

Belongs to the chaperonin (HSP60) family. As to quaternary structure, forms a cylinder of 14 subunits composed of two heptameric rings stacked back-to-back. Interacts with the co-chaperonin GroES.

It is found in the cytoplasm. It catalyses the reaction ATP + H2O + a folded polypeptide = ADP + phosphate + an unfolded polypeptide.. Together with its co-chaperonin GroES, plays an essential role in assisting protein folding. The GroEL-GroES system forms a nano-cage that allows encapsulation of the non-native substrate proteins and provides a physical environment optimized to promote and accelerate protein folding. This Pelobacter propionicus (strain DSM 2379 / NBRC 103807 / OttBd1) protein is Chaperonin GroEL.